The sequence spans 196 residues: Lipoprotein signal peptidase (196 aa).

Residues 1–24 (MAEAERIIGMPENPDVDGTDEGGS) are disordered. A run of 3 helical transmembrane segments spans residues 40-60 (ILAL…SKML), 92-112 (IGEA…VVIF), and 118-138 (LYSL…LGNL). Catalysis depends on residues D155 and D169. The helical transmembrane segment at 164–184 (VFNLADSAIVCGGILIVILSF) threads the bilayer.

Belongs to the peptidase A8 family.

It localises to the cell membrane. The catalysed reaction is Release of signal peptides from bacterial membrane prolipoproteins. Hydrolyzes -Xaa-Yaa-Zaa-|-(S,diacylglyceryl)Cys-, in which Xaa is hydrophobic (preferably Leu), and Yaa (Ala or Ser) and Zaa (Gly or Ala) have small, neutral side chains.. It participates in protein modification; lipoprotein biosynthesis (signal peptide cleavage). Functionally, this protein specifically catalyzes the removal of signal peptides from prolipoproteins. This chain is Lipoprotein signal peptidase, found in Streptomyces griseus subsp. griseus (strain JCM 4626 / CBS 651.72 / NBRC 13350 / KCC S-0626 / ISP 5235).